We begin with the raw amino-acid sequence, 533 residues long: Subtilisin-like protease 1 (533 aa).

The N-terminal stretch at 1–19 (MGVFRFISISLAAVSAANA) is a signal peptide. The propeptide occupies 20 to 116 (AQILSMPHAQ…VEPDTIISVH (97 aa)). The Inhibitor I9 domain occupies 34–115 (SYIVMMKDDT…FVEPDTIISV (82 aa)). One can recognise a Peptidase S8 domain in the interval 126-400 (SWGLARISNP…NVLINNGGAK (275 aa)). Active-site charge relay system residues include D158 and H190. Residues 175–198 (GSNQVNDGDDRDGSGHGTHTSGTM) form a disordered region. N-linked (GlcNAc...) asparagine glycosylation is found at N233 and N251. Positions 282–294 (NDNQDAQSSSPAS) are enriched in polar residues. The interval 282 to 312 (NDNQDAQSSSPASEPSVCTVGSSAEDDSRSS) is disordered. The active-site Charge relay system is S345. Residues 378 to 394 (TSSITDAGPGTPTNVLI) show a composition bias toward polar residues. The tract at residues 378-512 (TSSITDAGPG…YPGGDNFDFD (135 aa)) is disordered. Residues 405–470 (NPNPAPSPSP…FPGEPFPGEP (66 aa)) are compositionally biased toward pro residues. A compositionally biased stretch (low complexity) spans 471–487 (FPGESFPGESFPGESAP). Residues 488 to 502 (APAPMPPSPQHPHTP) show a composition bias toward pro residues.

It belongs to the peptidase S8 family.

Its subcellular location is the secreted. Its function is as follows. Secreted subtilisin-like serine protease with keratinolytic activity that contributes to pathogenicity. The protein is Subtilisin-like protease 1 (SUB1) of Arthroderma benhamiae (strain ATCC MYA-4681 / CBS 112371) (Trichophyton mentagrophytes).